Here is a 231-residue protein sequence, read N- to C-terminus: Killer cell lectin-like receptor subfamily F member 1 (231 aa).

Residues 1–38 are Cytoplasmic-facing; sequence MQDEERYMTLNVQSKKRTSTQTTQLTFKDYSVVLHWYK. Position 7 is a phosphotyrosine (Tyr7). The helical; Signal-anchor for type II membrane protein transmembrane segment at 39 to 59 threads the bilayer; sequence ILLGISGTLNGILALALISLI. Topologically, residues 60–231 are extracellular; the sequence is LLVSQGVLLK…SSVFKWICQY (172 aa). 4 N-linked (GlcNAc...) asparagine glycosylation sites follow: Asn77, Asn91, Asn96, and Asn176. A C-type lectin domain is found at 121–230; it reads YRGKCYWFSN…CSSVFKWICQ (110 aa). 2 disulfide bridges follow: Cys142–Cys229 and Cys208–Cys221.

As to quaternary structure, homodimer. Interacts with CLEC2B. Post-translationally, phosphorylated on Tyr-7; this phosphorylation is required for NKp80/KLRF1-mediated cytotoxicity.

It localises to the membrane. In terms of biological role, functions as an activating receptor involved in immunosurveillance upon binding to various ligands displayed at the surface of myeloid cells. Upon interaction with CLEC2B ligand, stimulates NK-cell cytotoxicity and cytokine production leading to the cytolysis of malignant CLEC2B-expressing myeloid cells. Actviation of the common cytotoxicity pathway involves SRC and SYK kinases. This chain is Killer cell lectin-like receptor subfamily F member 1 (KLRF1), found in Macaca fascicularis (Crab-eating macaque).